The chain runs to 208 residues: Thymidylate kinase (208 aa).

Position 10–17 (Gly10–Ser17) interacts with ATP.

The protein belongs to the thymidylate kinase family.

It catalyses the reaction dTMP + ATP = dTDP + ADP. Its function is as follows. Phosphorylation of dTMP to form dTDP in both de novo and salvage pathways of dTTP synthesis. The protein is Thymidylate kinase of Rhizorhabdus wittichii (strain DSM 6014 / CCUG 31198 / JCM 15750 / NBRC 105917 / EY 4224 / RW1) (Sphingomonas wittichii).